Here is a 334-residue protein sequence, read N- to C-terminus: UPF0104 membrane protein MTH_378 (334 aa).

Transmembrane regions (helical) follow at residues 7-27 (FYFFALSILLILALIIWMGPS), 33-53 (VYMADWMIIAIALLIHMGVLA), 120-140 (FFDLGIGGGLLLLAAVMVPVI), 142-162 (VIALFGAILSVLITYLIYLVN), 218-238 (VIFILSLLSWLMECLRLYLVF), 247-267 (FSAVIIIFLLANLVGILSALP), 277-297 (MAGLFVVFGVPGFLAGSIALV), and 300-320 (IISFWMVTALGAIFSSCYAGE).

The protein belongs to the UPF0104 family.

The protein localises to the cell membrane. The protein is UPF0104 membrane protein MTH_378 of Methanothermobacter thermautotrophicus (strain ATCC 29096 / DSM 1053 / JCM 10044 / NBRC 100330 / Delta H) (Methanobacterium thermoautotrophicum).